The primary structure comprises 103 residues: Co-chaperonin GroES (103 aa).

The protein belongs to the GroES chaperonin family. Heptamer of 7 subunits arranged in a ring. Interacts with the chaperonin GroEL.

Its subcellular location is the cytoplasm. Its function is as follows. Together with the chaperonin GroEL, plays an essential role in assisting protein folding. The GroEL-GroES system forms a nano-cage that allows encapsulation of the non-native substrate proteins and provides a physical environment optimized to promote and accelerate protein folding. GroES binds to the apical surface of the GroEL ring, thereby capping the opening of the GroEL channel. This Microcystis aeruginosa (strain NIES-843 / IAM M-2473) protein is Co-chaperonin GroES.